Consider the following 202-residue polypeptide: Protein U22 (202 aa).

A run of 2 helical transmembrane segments spans residues 5-25 (GWSL…LHII) and 172-192 (FVYY…SCWF).

Its subcellular location is the host membrane. In Human herpesvirus 6B (strain Z29) (HHV-6 variant B), this protein is Protein U22 (U22).